The following is a 105-amino-acid chain: MPPIILVFFLVLIPASQQYPFSLESLNDQIINEEVIEYMLENSIRSSRTRRVPDEKKIYRCGRRIHSYVFAVCGKACESNTEVNIASKCCREECTDDFIRKQCCP.

The signal sequence occupies residues 1–18 (MPPIILVFFLVLIPASQQ). The propeptide occupies 19–57 (YPFSLESLNDQIINEEVIEYMLENSIRSSRTRRVPDEKK). Disulfide bonds link Cys61-Cys90, Cys73-Cys103, Cys77-Cys104, and Cys89-Cys94.

This sequence belongs to the insulin family.

It is found in the secreted. Insulin-like peptide which plays a role in ageing as a consequence of daf-16 activity. The polypeptide is Insulin-like peptide 7 (Caenorhabditis elegans).